The primary structure comprises 580 residues: Isochorismate synthase, chloroplastic (580 aa).

Residues 1 to 91 constitute a chloroplast transit peptide; sequence MASITGHCVA…LAMERLSSAV (91 aa).

The protein belongs to the isochorismate synthase family. Mg(2+) is required as a cofactor.

Its subcellular location is the plastid. The protein localises to the chloroplast. It carries out the reaction chorismate = isochorismate. Its activity is regulated as follows. Not inhibited by Tyr, Phe or Trp. Its function is as follows. Involved in the synthesis of o-succinylbenzoic acid, 2,3-dihydroxybenzoic acid and salicylic acid (SA). The polypeptide is Isochorismate synthase, chloroplastic (Catharanthus roseus (Madagascar periwinkle)).